Consider the following 305-residue polypeptide: Serine/threonine-protein kinase 16 (305 aa).

Gly2 carries N-myristoyl glycine lipidation. Residues Cys6 and Cys8 are each lipidated (S-palmitoyl cysteine). Positions Tyr20 to Leu293 constitute a Protein kinase domain. Residues Leu26–Val34 and Lys49 contribute to the ATP site. Asp148 acts as the Proton acceptor in catalysis. The interval Asp166–Glu202 is activation loop. Ser197 is subject to Phosphoserine; by autocatalysis. Tyr198 carries the phosphotyrosine; by autocatalysis modification.

Belongs to the protein kinase superfamily. Ser/Thr protein kinase family. As to quaternary structure, monomer. Interacts with DRG1 (via its N-terminal); the interaction phosphorylates DRG1. In terms of processing, mainly autophosphorylated on serine/threonine residues. Also autophosphorylated on Tyr-198. As to expression, ubiquitously expressed at low levels. Relatively higher levels in testis, kidney and liver.

The protein localises to the cytoplasm. It is found in the perinuclear region. Its subcellular location is the membrane. The enzyme catalyses L-seryl-[protein] + ATP = O-phospho-L-seryl-[protein] + ADP + H(+). It catalyses the reaction L-threonyl-[protein] + ATP = O-phospho-L-threonyl-[protein] + ADP + H(+). The catalysed reaction is L-tyrosyl-[protein] + ATP = O-phospho-L-tyrosyl-[protein] + ADP + H(+). In terms of biological role, membrane-associated protein kinase that phosphorylates on serine and threonine residues. In vitro substrates include DRG1, ENO1 and EIF4EBP1. Also autophosphorylates. May be involved in secretory vesicle trafficking or intracellular signaling. May have a role in regulating stromal-epithelial interactions that occur during ductal morphogenesis in the mammary gland. May be involved in TGF-beta signaling. Able to autophosphorylate on Tyr residue; it is however unclear whether it has tyrosine-protein kinase toward other proteins. This is Serine/threonine-protein kinase 16 (Stk16) from Mus musculus (Mouse).